The primary structure comprises 130 residues: uncharacterized protein (130 aa).

An N-acetylmethionine modification is found at M1.

In terms of assembly, homotetramer.

This is an uncharacterized protein from Arabidopsis thaliana (Mouse-ear cress).